The primary structure comprises 415 residues: MRVLLTSFAHRTHFQGLVPLAWALRTAGHDVRVAAQPALTDAVIGAGLTAVPVGSDHRLFDIVPEVAAQVHRYSFYLDFYHREQELHSWEFLLGMQEATSRWVYPVVNNDSFVAELVDFARDWRPDLVLWEPFTFAGAVAARACGAAHARLLWGSDLTGYFRGRFQAQRLRRPPEDRPDPLGTWLTEVAGRFGVEFGEDLAVGQWSVDQLPPSFRLDTGMETVVARTLPYNGASVVPDWLKKGSATRRICITGGFSGLGLAADADQFARTLAQLARFDGEIVVTGSGPDTSAVPDNIRLVDFVPMGVLLQNCAAIIHHGGAGTWATALHHGIPQISVAHEWDCMLRGQQTAELGAGIYLRPDEVDADSLASALTQVVEDPTYTENAVKLREEALSDPTPQEIVPRLEELTRRHAG.

This sequence belongs to the glycosyltransferase 28 family.

The catalysed reaction is dTDP-beta-L-mycarose + erythronolide B = 3-O-alpha-L-mycarosylerythronolide B + dTDP + H(+). Functionally, involved in the biosynthesis of the macrolide antibiotic erythromycin. Catalyzes the reversible transfer of mycarosyl from dTDP-beta-L-mycarose to erythronolide B to yield 3-alpha-L-mycarosylerythronolide B. It can also use TDP-beta-L-cladinose. This is Erythronolide mycarosyltransferase from Saccharopolyspora erythraea (Streptomyces erythraeus).